A 504-amino-acid polypeptide reads, in one-letter code: ATP synthase subunit alpha, chloroplastic (504 aa).

169–176 (GDRQTGKT) contributes to the ATP binding site.

It belongs to the ATPase alpha/beta chains family. F-type ATPases have 2 components, CF(1) - the catalytic core - and CF(0) - the membrane proton channel. CF(1) has five subunits: alpha(3), beta(3), gamma(1), delta(1), epsilon(1). CF(0) has four main subunits: a, b, b' and c.

It is found in the plastid. It localises to the chloroplast thylakoid membrane. It carries out the reaction ATP + H2O + 4 H(+)(in) = ADP + phosphate + 5 H(+)(out). Produces ATP from ADP in the presence of a proton gradient across the membrane. The alpha chain is a regulatory subunit. The polypeptide is ATP synthase subunit alpha, chloroplastic (Stigeoclonium helveticum (Green alga)).